A 297-amino-acid polypeptide reads, in one-letter code: Probable endonuclease 4 (297 aa).

Residues H69, H110, E145, D179, H182, H214, D227, H229, and E259 each coordinate Zn(2+).

It belongs to the AP endonuclease 2 family. The cofactor is Zn(2+).

It catalyses the reaction Endonucleolytic cleavage to 5'-phosphooligonucleotide end-products.. Its function is as follows. Endonuclease IV plays a role in DNA repair. It cleaves phosphodiester bonds at apurinic or apyrimidinic (AP) sites, generating a 3'-hydroxyl group and a 5'-terminal sugar phosphate. This is Probable endonuclease 4 from Listeria innocua serovar 6a (strain ATCC BAA-680 / CLIP 11262).